Reading from the N-terminus, the 118-residue chain is Large ribosomal subunit protein uL18 (118 aa).

The interval 1 to 25 is disordered; sequence MITKPDKNKVRQKRHRRVRGKLSGT. Residues 10-20 show a composition bias toward basic residues; the sequence is VRQKRHRRVRG.

Belongs to the universal ribosomal protein uL18 family. In terms of assembly, part of the 50S ribosomal subunit; part of the 5S rRNA/L5/L18/L25 subcomplex. Contacts the 5S and 23S rRNAs.

In terms of biological role, this is one of the proteins that bind and probably mediate the attachment of the 5S RNA into the large ribosomal subunit, where it forms part of the central protuberance. This is Large ribosomal subunit protein uL18 from Streptococcus gordonii (strain Challis / ATCC 35105 / BCRC 15272 / CH1 / DL1 / V288).